The following is a 790-amino-acid chain: Sodium- and chloride-dependent glycine transporter 2 (790 aa).

Residues 1-39 are disordered; that stretch reads MDYVNVVDGSKKTMNSPEGAAPGLIGATGITNPTPDNDL. Residues 1 to 192 lie on the Cytoplasmic side of the membrane; it reads MDYVNVVDGS…ARGNWSNKLD (192 aa). 3 helical membrane-spanning segments follow: residues 193–213, 220–240, and 264–284; these read FILSMVGYAVGLGNVWRFPYL, GAFLIPYLTMLALAGLPIFYL, and GCGIAMLIISVLIAIYYNIIM. Residues Gly-199, Ala-201, Val-202, and Asn-206 each coordinate Na(+). The Extracellular segment spans residues 285-387; it reads CYTIFYLFAS…GIEYPGEIRW (103 aa). Cysteines 304 and 313 form a disulfide. N-linked (GlcNAc...) asparagine glycans are attached at residues Asn-336, Asn-346, Asn-351, and Asn-357. A run of 3 helical transmembrane segments spans residues 388 to 408, 427 to 447, and 463 to 483; these read PLVFCLFLAWIIVYASLAKGI, VILLFRGVTLPGAGDGIWWFI, and AATQIFFSLSAAWGGLITLSS. Na(+)-binding residues include Ser-470 and Asn-502. 6 helical membrane-spanning segments follow: residues 504–524, 556–576, 597–617, 631–651, 672–692, and 708–728; these read ATSIFAGFVIFSVIGFMAHIL, WAIIFFLMLLTLGLDTMFATI, LFTLVCCVAFFIMGFPMITQG, SYSLVIIAIFELVGISYIYGL, ICWAFVTPTILTFILGFSFYQ, and MVMGWLMLACSVIWIPIMFVI. Positions 567 and 570 each coordinate Na(+). Over 729–790 the chain is Cytoplasmic; that stretch reads KMFLAPGTFI…PKDFELGTQC (62 aa).

It belongs to the sodium:neurotransmitter symporter (SNF) (TC 2.A.22) family. SLC6A5 subfamily. In terms of tissue distribution, first expressed in late neurula stages in the anterior spinal cord, where expression intensifies through the tailbud stages, and by hatching, expression is seen in the hindbrain. During late hatching stages, expression extends along most of the length of the spinal cord, mildly intensifies in the hindbrain, and appears in localized regions of the lateral forebrain and medial midbrain. By the swimming tadpole stage, weak expression appears in the anterior hindbrain, with stronger expression in the posterior, postmitotic neurons.

It is found in the cell membrane. The catalysed reaction is glycine(out) + chloride(out) + 3 Na(+)(out) = glycine(in) + chloride(in) + 3 Na(+)(in). Functionally, sodium- and chloride-dependent glycine transporter. Terminates the action of glycine by its high affinity sodium-dependent reuptake into presynaptic terminals. May be responsible for the termination of neurotransmission at strychnine-sensitive glycinergic synapses. This is Sodium- and chloride-dependent glycine transporter 2 from Xenopus laevis (African clawed frog).